A 264-amino-acid polypeptide reads, in one-letter code: Thiazole synthase (264 aa).

Lys106 (schiff-base intermediate with DXP) is an active-site residue. 1-deoxy-D-xylulose 5-phosphate-binding positions include Gly167, 193-194 (AG), and 215-216 (NS).

It belongs to the ThiG family. As to quaternary structure, homotetramer. Forms heterodimers with either ThiH or ThiS.

It is found in the cytoplasm. The enzyme catalyses [ThiS sulfur-carrier protein]-C-terminal-Gly-aminoethanethioate + 2-iminoacetate + 1-deoxy-D-xylulose 5-phosphate = [ThiS sulfur-carrier protein]-C-terminal Gly-Gly + 2-[(2R,5Z)-2-carboxy-4-methylthiazol-5(2H)-ylidene]ethyl phosphate + 2 H2O + H(+). The protein operates within cofactor biosynthesis; thiamine diphosphate biosynthesis. Functionally, catalyzes the rearrangement of 1-deoxy-D-xylulose 5-phosphate (DXP) to produce the thiazole phosphate moiety of thiamine. Sulfur is provided by the thiocarboxylate moiety of the carrier protein ThiS. In vitro, sulfur can be provided by H(2)S. This is Thiazole synthase from Stutzerimonas stutzeri (strain A1501) (Pseudomonas stutzeri).